An 843-amino-acid chain; its full sequence is MVAEESGPGAQNSPYQLRRKTLLPKRTACPTKNSMEGASTSTTENFGHRAKRARVSGKSQDLSAAPAEQYLQEKLPDEVVLKIFSYLLEQDLCRAACVCKRFSELANDPILWKRLYMEVFEYTRPMMHPEPGKFYQINPEEYEHPNPWKESFQQLYKGAHVKPGFAEHFYSNPARYKGRENMLYYDTIEDALGGVQEAHFDGLIFVHSGIYTDEWIYIESPITMIGAAPGKVADKVIIENTRDSTFVFMEGSEDAYVGYMTIRFNPDDKSAQHHNAHHCLEITVNCSPIIDHCIIRSTCTVGSAVCVSGQGACPTIKHCNISDCENVGLYITDHAQGIYEDNEISNNALAGIWVKNHGNPIIRRNHIHHGRDVGVFTFDHGMGYFESCNIHRNRIAGFEVKAYANPTVVRCEIHHGQTGGIYVHEKGRGQFIENKIYANNFAGVWITSNSDPTIRGNSIFNGNQGGVYIFGDGRGLIEGNDIYGNALAGIQIRTNSCPIVRHNKIHDGQHGGIYVHEKGQGVIEENEVYSNTLAGVWVTTGSTPVLRRNRIHSGKQVGVYFYDNGHGVLEDNDIYNHMYSGVQIRTGSNPKIRRNKIWGGQNGGILVYNSGLGCIEDNEIFDNAMAGVWIKTDSNPTLRRNKIHDGRDGGICIFNGGRGLLEENDIFRNAQAGVLISTNSHPVLRKNRIFDGFAAGIEITNHATATLEGNQIFNNRFGGLFLASGVNVTMKDNKIMNNQDAIEKAVSRGQCLYKISSYTSYPMHDFYRCHTCNTTDRNAICVNCIKKCHQGHDVEFIRHDRFFCDCGAGTLSNPCTLAGEPTHDTDTLYDSAPPIESNTLQHN.

A disordered region spans residues 1–63 (MVAEESGPGA…RVSGKSQDLS (63 aa)). Positions 30-45 (PTKNSMEGASTSTTEN) are enriched in polar residues. Residues 69–115 (QYLQEKLPDEVVLKIFSYLLEQDLCRAACVCKRFSELANDPILWKRL) enclose the F-box domain. 19 PbH1 repeats span residues 311-333 (GACPTIKHCNISDCENVGLYITD), 334-356 (HAQGIYEDNEISNNALAGIWVKN), 357-379 (HGNPIIRRNHIHHGRDVGVFTFD), 380-402 (HGMGYFESCNIHRNRIAGFEVKA), 403-425 (YANPTVVRCEIHHGQTGGIYVHE), 426-448 (KGRGQFIENKIYANNFAGVWITS), 449-471 (NSDPTIRGNSIFNGNQGGVYIFG), 472-494 (DGRGLIEGNDIYGNALAGIQIRT), 495-517 (NSCPIVRHNKIHDGQHGGIYVHE), 518-540 (KGQGVIEENEVYSNTLAGVWVTT), 541-563 (GSTPVLRRNRIHSGKQVGVYFYD), 564-586 (NGHGVLEDNDIYNHMYSGVQIRT), 587-609 (GSNPKIRRNKIWGGQNGGILVYN), 610-632 (SGLGCIEDNEIFDNAMAGVWIKT), 633-655 (DSNPTLRRNKIHDGRDGGICIFN), 656-678 (GGRGLLEENDIFRNAQAGVLIST), 679-701 (NSHPVLRKNRIFDGFAAGIEITN), 702-724 (HATATLEGNQIFNNRFGGLFLAS), and 725-746 (GVNVTMKDNKIMNNQDAIEKAV). Residues 749 to 820 (GQCLYKISSY…LSNPCTLAGE (72 aa)) form a UBR-type zinc finger.

In terms of assembly, component of the SCF(FBXO11) complex consisting of CUL1, RBX1, SKP1 and FBXO11. Interacts with CIITA.

The protein localises to the nucleus. It localises to the chromosome. The protein operates within protein modification; protein ubiquitination. Its function is as follows. Substrate recognition component of a SCF (SKP1-CUL1-F-box protein) E3 ubiquitin-protein ligase complex which mediates the ubiquitination and subsequent proteasomal degradation of target proteins, such as DTL/CDT2, BCL6, SNAI1 and PRDM1/BLIMP1. The SCF(FBXO11) complex mediates ubiquitination and degradation of BCL6, thereby playing a role in the germinal center B-cells terminal differentiation toward memory B-cells and plasma cells. The SCF(FBXO11) complex also mediates ubiquitination and degradation of DTL, an important step for the regulation of TGF-beta signaling, cell migration and the timing of the cell-cycle progression and exit. The SCF(FBXO11) complex also catalyzes ubiquitination and degradation of GSK3B-phosphorylated SNAI1. Binds to and neddylates phosphorylated p53/TP53, inhibiting its transcriptional activity. Plays a role in the regulatiom of erythropoiesis but not myelopoiesis or megakaryopoiesis. Mechanistically, activates erythroid genes by mediating the degradation of BAHD1, a heterochromatin-associated protein that recruits corepressors to H3K27me3 marks. Participates in macrophage cell death and inflammation in response to bacterial toxins by regulating the expression of complement 5a receptor 1/C5AR1 and IL-1beta. Acts as a critical regulator to determine the level of MHC-II by mediating the recognition of degron at the P/S/T domain of CIITA leading to its ubiquitination and subsequent degradation via the proteasome. Participates in the antiviral repsonse by initiating the activation of TBK1-IRF3-IFN-I axis. Mediates the 'Lys-63'-linked ubiquitination of TRAF3 to strengthen the interaction between TRAF3 and TBK1. This Rattus norvegicus (Rat) protein is F-box only protein 11 (Fbxo11).